The following is a 249-amino-acid chain: Fatty acid elongase 5 (249 aa).

The next 3 helical transmembrane spans lie at 23-43 (VFVN…VIVL), 68-88 (VALS…GVFN), and 100-120 (WIFV…FIVL). The HxxHH motif motif lies at 131-135 (HIYHH). H134 acts as the Nucleophile in catalysis. The next 4 helical transmembrane spans lie at 138–158 (IGFI…AFFG), 159–179 (AWIN…TSLG), 193–213 (MIQF…HSPI), and 217–236 (WAVL…MRFY).

This sequence belongs to the ELO family.

The protein localises to the membrane. It carries out the reaction an acyl-CoA + malonyl-CoA + H(+) = a 3-oxoacyl-CoA + CO2 + CoA. It functions in the pathway lipid metabolism; polyunsaturated fatty acid biosynthesis. In terms of biological role, involved in the synthesis of fatty acids. Elongates C20 polyunsaturated fatty acids (PUFAs) with a preference for n-6 PUFAs. This chain is Fatty acid elongase 5, found in Leishmania major.